The chain runs to 284 residues: MEMO1 family protein Saci_0089 (284 aa).

It belongs to the MEMO1 family.

The chain is MEMO1 family protein Saci_0089 from Sulfolobus acidocaldarius (strain ATCC 33909 / DSM 639 / JCM 8929 / NBRC 15157 / NCIMB 11770).